The sequence spans 940 residues: UvrABC system protein A (940 aa).

Position 31–38 (G31–S38) interacts with ATP. The segment at C252 to C279 adopts a C4-type zinc-finger fold. ABC transporter domains are found at residues W309 to L586 and R606 to K936. Residue G639–S646 participates in ATP binding. Residues C739 to C765 form a C4-type zinc finger.

Belongs to the ABC transporter superfamily. UvrA family. As to quaternary structure, forms a heterotetramer with UvrB during the search for lesions.

The protein localises to the cytoplasm. The UvrABC repair system catalyzes the recognition and processing of DNA lesions. UvrA is an ATPase and a DNA-binding protein. A damage recognition complex composed of 2 UvrA and 2 UvrB subunits scans DNA for abnormalities. When the presence of a lesion has been verified by UvrB, the UvrA molecules dissociate. The chain is UvrABC system protein A from Vibrio vulnificus (strain CMCP6).